Here is a 352-residue protein sequence, read N- to C-terminus: uncharacterized protein (352 aa).

To M.pneumoniae MPN_633 (in the N-terminal section), and M.pneumoniae MPN_634 (in the C-terminal section).

This is an uncharacterized protein from Mycoplasma pneumoniae (strain ATCC 29342 / M129 / Subtype 1) (Mycoplasmoides pneumoniae).